The sequence spans 458 residues: Serine--tRNA ligase (458 aa).

An L-serine-binding site is contributed by 255–257; the sequence is TSE. ATP-binding positions include 286–288 and valine 302; that span reads RKE. Glutamate 309 contributes to the L-serine binding site. ATP is bound at residue 373-376; sequence ELVS. Threonine 409 is an L-serine binding site.

The protein belongs to the class-II aminoacyl-tRNA synthetase family. Type-1 seryl-tRNA synthetase subfamily. Homodimer. The tRNA molecule binds across the dimer.

The protein localises to the cytoplasm. The catalysed reaction is tRNA(Ser) + L-serine + ATP = L-seryl-tRNA(Ser) + AMP + diphosphate + H(+). It carries out the reaction tRNA(Sec) + L-serine + ATP = L-seryl-tRNA(Sec) + AMP + diphosphate + H(+). Its pathway is aminoacyl-tRNA biosynthesis; selenocysteinyl-tRNA(Sec) biosynthesis; L-seryl-tRNA(Sec) from L-serine and tRNA(Sec): step 1/1. Functionally, catalyzes the attachment of serine to tRNA(Ser). Is also able to aminoacylate tRNA(Sec) with serine, to form the misacylated tRNA L-seryl-tRNA(Sec), which will be further converted into selenocysteinyl-tRNA(Sec). This Ignicoccus hospitalis (strain KIN4/I / DSM 18386 / JCM 14125) protein is Serine--tRNA ligase.